Here is a 295-residue protein sequence, read N- to C-terminus: ATP synthase gamma chain (295 aa).

It belongs to the ATPase gamma chain family. F-type ATPases have 2 components, CF(1) - the catalytic core - and CF(0) - the membrane proton channel. CF(1) has five subunits: alpha(3), beta(3), gamma(1), delta(1), epsilon(1). CF(0) has three main subunits: a, b and c.

It localises to the cell membrane. In terms of biological role, produces ATP from ADP in the presence of a proton gradient across the membrane. The gamma chain is believed to be important in regulating ATPase activity and the flow of protons through the CF(0) complex. The sequence is that of ATP synthase gamma chain from Herpetosiphon aurantiacus (strain ATCC 23779 / DSM 785 / 114-95).